A 338-amino-acid chain; its full sequence is Protein mono-ADP-ribosyltransferase PARP11 (338 aa).

Glu-13 carries the post-translational modification ADP-ribosyl glutamic acid. Residue Lys-18 is modified to N6-(ADP-ribosyl)lysine. The region spanning 22-106 (NEVDDMDTSD…TTGKQRLIKR (85 aa)) is the WWE domain. Cys-56 and Cys-72 each carry ADP-ribosylcysteine. At Asp-87 the chain carries ADP-ribosyl aspartic acid. In terms of domain architecture, PARP catalytic spans 123 to 338 (IPMPPHWENV…IYPEYLIDFH (216 aa)).

Belongs to the ARTD/PARP family. As to quaternary structure, interacts with PARP12; this interaction plays a role in zika virus suppression. In terms of processing, auto-mono-ADP-ribosylated.

It is found in the nucleus. It localises to the nuclear pore complex. The enzyme catalyses L-aspartyl-[protein] + NAD(+) = 4-O-(ADP-D-ribosyl)-L-aspartyl-[protein] + nicotinamide. It carries out the reaction L-cysteinyl-[protein] + NAD(+) = S-(ADP-D-ribosyl)-L-cysteinyl-[protein] + nicotinamide + H(+). The catalysed reaction is L-glutamyl-[protein] + NAD(+) = 5-O-(ADP-D-ribosyl)-L-glutamyl-[protein] + nicotinamide. It catalyses the reaction L-lysyl-[protein] + NAD(+) = N(6)-(ADP-D-ribosyl)-L-lysyl-[protein] + nicotinamide + H(+). Mono-ADP-ribosyltransferase that mediates mono-ADP-ribosylation of target proteins. Plays a role in nuclear envelope stability and nuclear remodeling during spermiogenesis. Inhibits the type I interferon activated signaling pathway. Mechanistically, mono-ADP-ribosylates beta-TrCP/BTRC to promote IFNAR1 ubiquitination and protect BTRC from ubiquitin-proteasome degradation. Additionally, acts as an antiviral factor by cooperating with PARP12 to suppress Zika virus replication, independent of IFNAR1 regulation or intrinsic PARP enzymatic activity. Instead, facilitates the degradation of viral NS1 and NS3 proteins, potentially disrupting viral replication. The polypeptide is Protein mono-ADP-ribosyltransferase PARP11 (Homo sapiens (Human)).